The following is a 179-amino-acid chain: Large ribosomal subunit protein uL6 (179 aa).

Belongs to the universal ribosomal protein uL6 family. In terms of assembly, part of the 50S ribosomal subunit.

Functionally, this protein binds to the 23S rRNA, and is important in its secondary structure. It is located near the subunit interface in the base of the L7/L12 stalk, and near the tRNA binding site of the peptidyltransferase center. This is Large ribosomal subunit protein uL6 from Solidesulfovibrio magneticus (strain ATCC 700980 / DSM 13731 / RS-1) (Desulfovibrio magneticus).